We begin with the raw amino-acid sequence, 482 residues long: MLPVVALVGRPNVGKSTLFNRLTRTRDALVADFPGLTRDRKYGQANYEGLQFIVVDTGGISGDEQGIDMAMANQSLMAIDEADVVLFLVDARAGLTAADQGIAEHLRKQNKSVYVVANKVDGIDGDSESADFFALGLGDVNQIAAAHGRGVTQLLTHTLMPLSEQFPDMQVPEDEEADEEIDAEKQLEKLLASPIKLAIVGKPNVGKSTLTNRILGEERVVVYDQPGTTRDSIFIPMERDDREYVLIDTAGVRRRRSISEAVEKFSIVKTLQAIEEANVVLLVIDAQEGVTDQDLSLLGFVLNSGRSLVVAVNKWDGLAKDVKDEIKRELDRRLGFIDFARLHYISALHGTNVGHLFESVQEAYNSATKRINTSMLTRIMDMAQADHQPPVVRGRRVKMKYAHAGGYNPPIIVIHGNQVKDLPDSYKRYMMNYFRKSLKVMGTPIKVEFREGANPFESNTNTMTDSQRRKRKMLMRMHKNNK.

2 EngA-type G domains span residues 3–166 (PVVA…SEQF) and 195–368 (IKLA…NSAT). GTP contacts are provided by residues 9 to 16 (GRPNVGKS), 56 to 60 (DTGGI), 118 to 121 (NKVD), 201 to 208 (GKPNVGKS), 248 to 252 (DTAGV), and 313 to 316 (NKWD). Positions 369 to 453 (KRINTSMLTR…PIKVEFREGA (85 aa)) constitute a KH-like domain.

This sequence belongs to the TRAFAC class TrmE-Era-EngA-EngB-Septin-like GTPase superfamily. EngA (Der) GTPase family. As to quaternary structure, associates with the 50S ribosomal subunit.

In terms of biological role, GTPase that plays an essential role in the late steps of ribosome biogenesis. In Pseudoalteromonas atlantica (strain T6c / ATCC BAA-1087), this protein is GTPase Der.